The following is a 156-amino-acid chain: Ribosomal RNA large subunit methyltransferase H (156 aa).

S-adenosyl-L-methionine-binding positions include leucine 73, glycine 104, and 123-128; that span reads LSSLTL.

Belongs to the RNA methyltransferase RlmH family. In terms of assembly, homodimer.

The protein resides in the cytoplasm. The catalysed reaction is pseudouridine(1915) in 23S rRNA + S-adenosyl-L-methionine = N(3)-methylpseudouridine(1915) in 23S rRNA + S-adenosyl-L-homocysteine + H(+). In terms of biological role, specifically methylates the pseudouridine at position 1915 (m3Psi1915) in 23S rRNA. The polypeptide is Ribosomal RNA large subunit methyltransferase H (Bordetella petrii (strain ATCC BAA-461 / DSM 12804 / CCUG 43448)).